Reading from the N-terminus, the 180-residue chain is Large ribosomal subunit protein uL5c (180 aa).

The protein belongs to the universal ribosomal protein uL5 family. In terms of assembly, part of the 50S ribosomal subunit; contacts the 5S rRNA.

It is found in the plastid. The protein resides in the chloroplast. Binds 5S rRNA, forms part of the central protuberance of the 50S subunit. The chain is Large ribosomal subunit protein uL5c (rpl5) from Tupiella akineta (Green alga).